Here is a 674-residue protein sequence, read N- to C-terminus: UvrABC system protein B (674 aa).

A Helicase ATP-binding domain is found at 26-183 (EGLEDGLAHQ…RRLAELQYTR (158 aa)). 39 to 46 (GVTGSGKT) serves as a coordination point for ATP. A Beta-hairpin motif is present at residues 92–115 (YYDYYQPEAYVPSSDTFIEKDASV). The 167-residue stretch at 431–597 (QVDDLLSEIR…GLNKKISDIL (167 aa)) folds into the Helicase C-terminal domain. The UVR domain maps to 634–669 (QKRIHQLEAQMQQHAQNLEFEEAAQVRDQLHQVREL).

Belongs to the UvrB family. Forms a heterotetramer with UvrA during the search for lesions. Interacts with UvrC in an incision complex.

Its subcellular location is the cytoplasm. The UvrABC repair system catalyzes the recognition and processing of DNA lesions. A damage recognition complex composed of 2 UvrA and 2 UvrB subunits scans DNA for abnormalities. Upon binding of the UvrA(2)B(2) complex to a putative damaged site, the DNA wraps around one UvrB monomer. DNA wrap is dependent on ATP binding by UvrB and probably causes local melting of the DNA helix, facilitating insertion of UvrB beta-hairpin between the DNA strands. Then UvrB probes one DNA strand for the presence of a lesion. If a lesion is found the UvrA subunits dissociate and the UvrB-DNA preincision complex is formed. This complex is subsequently bound by UvrC and the second UvrB is released. If no lesion is found, the DNA wraps around the other UvrB subunit that will check the other stand for damage. This chain is UvrABC system protein B, found in Erwinia tasmaniensis (strain DSM 17950 / CFBP 7177 / CIP 109463 / NCPPB 4357 / Et1/99).